Consider the following 661-residue polypeptide: UvrABC system protein B (661 aa).

The Helicase ATP-binding domain maps to 25 to 182 (AGLSSKKRSQ…NDLINLQYER (158 aa)). Residue 38–45 (GITGSGKT) coordinates ATP. The Beta-hairpin signature appears at 91 to 114 (YYDYYQPEAYIARTDTFIEKDSSI). The Helicase C-terminal domain maps to 430–592 (QVEDLISEIQ…IIPKTINRAI (163 aa)). Residues 621 to 656 (KTHIDKLKKEMLKAASNLEFEQAVKLRDQLKTLEAA) enclose the UVR domain.

It belongs to the UvrB family. As to quaternary structure, forms a heterotetramer with UvrA during the search for lesions. Interacts with UvrC in an incision complex.

Its subcellular location is the cytoplasm. In terms of biological role, the UvrABC repair system catalyzes the recognition and processing of DNA lesions. A damage recognition complex composed of 2 UvrA and 2 UvrB subunits scans DNA for abnormalities. Upon binding of the UvrA(2)B(2) complex to a putative damaged site, the DNA wraps around one UvrB monomer. DNA wrap is dependent on ATP binding by UvrB and probably causes local melting of the DNA helix, facilitating insertion of UvrB beta-hairpin between the DNA strands. Then UvrB probes one DNA strand for the presence of a lesion. If a lesion is found the UvrA subunits dissociate and the UvrB-DNA preincision complex is formed. This complex is subsequently bound by UvrC and the second UvrB is released. If no lesion is found, the DNA wraps around the other UvrB subunit that will check the other stand for damage. This chain is UvrABC system protein B, found in Rickettsia peacockii (strain Rustic).